The chain runs to 694 residues: Methionine--tRNA ligase (694 aa).

The 'HIGH' region signature appears at 12 to 22 (PYANGPLHLGH). Zn(2+) is bound by residues Cys143, Cys146, Cys156, and Cys159. The 'KMSKS' region motif lies at 330 to 334 (KMSKS). Lys333 is an ATP binding site. The interval 550 to 577 (LAAPATPATASKPAPAKADAKPAAAANP) is disordered. Positions 551 to 575 (AAPATPATASKPAPAKADAKPAAAA) are enriched in low complexity. One can recognise a tRNA-binding domain in the interval 591 to 694 (DFAKLDLRIG…SGAQPGMPVR (104 aa)).

The protein belongs to the class-I aminoacyl-tRNA synthetase family. MetG type 1 subfamily. In terms of assembly, homodimer. Zn(2+) serves as cofactor.

Its subcellular location is the cytoplasm. It catalyses the reaction tRNA(Met) + L-methionine + ATP = L-methionyl-tRNA(Met) + AMP + diphosphate. Functionally, is required not only for elongation of protein synthesis but also for the initiation of all mRNA translation through initiator tRNA(fMet) aminoacylation. This chain is Methionine--tRNA ligase, found in Xanthomonas axonopodis pv. citri (strain 306).